A 34-amino-acid chain; its full sequence is Photosystem II reaction center protein M (34 aa).

Residues Ile5–Ile25 traverse the membrane as a helical segment.

Belongs to the PsbM family. PSII is composed of 1 copy each of membrane proteins PsbA, PsbB, PsbC, PsbD, PsbE, PsbF, PsbH, PsbI, PsbJ, PsbK, PsbL, PsbM, PsbT, PsbX, PsbY, PsbZ, Psb30/Ycf12, at least 3 peripheral proteins of the oxygen-evolving complex and a large number of cofactors. It forms dimeric complexes.

Its subcellular location is the plastid. The protein resides in the chloroplast thylakoid membrane. In terms of biological role, one of the components of the core complex of photosystem II (PSII). PSII is a light-driven water:plastoquinone oxidoreductase that uses light energy to abstract electrons from H(2)O, generating O(2) and a proton gradient subsequently used for ATP formation. It consists of a core antenna complex that captures photons, and an electron transfer chain that converts photonic excitation into a charge separation. This subunit is found at the monomer-monomer interface. The polypeptide is Photosystem II reaction center protein M (Welwitschia mirabilis (Tree tumbo)).